Consider the following 220-residue polypeptide: Ras-related protein Rab-3A (220 aa).

Residues Ser-31, Ser-32, Val-33, Gly-34, Lys-35, Thr-36, Ser-37, Thr-48, Pro-49, Ser-53, and Thr-54 each coordinate GTP. Thr-36 contributes to the Mg(2+) binding site. A Switch 1 motif is present at residues 49–58; that stretch reads PAFVSTVGID. Residues Thr-54 and Asp-77 each contribute to the Mg(2+) site. A GTP-binding site is contributed by Gly-80. The Switch 2 signature appears at 80–96; sequence GQERYRTITTAYYRGAM. Position 86 is a phosphothreonine (Thr-86). Positions 135, 136, 138, 166, and 167 each coordinate GTP. Phosphoserine occurs at positions 188 and 190. Residues 194 to 220 form a disordered region; the sequence is ADPAVTGAKQGPQLTDQQAPPHQDCAC. Residues Cys-218 and Cys-220 are each lipidated (S-geranylgeranyl cysteine). Cys-220 carries the cysteine methyl ester modification.

The protein belongs to the small GTPase superfamily. Rab family. In terms of assembly, interacts with RIMS1 and RIMS2. Interacts with Rabphilin-3A/RPH3A and Rab effector Noc2/RPH3AL. Interacts with SYTL4. Interacts with RAB3IP. Interacts with SGSM1 and SGSM3. Interacts with SYT1. Interacts with MYH9; this interaction is essential for lysosome exocytosis and plasma membrane repair. Interacts with STXBP1; this interaction promotes RAB3A dissociation from the vesicle membrane. Interacts with SNCA. Interacts with GDI1, GDI2, CHM and CHML; phosphorylation at Thr-86 disrupts these interactions. Interacts with MADD (via uDENN domain); the GTP-bound form is preferred for interaction. It depends on Mg(2+) as a cofactor. Phosphorylation of Thr-86 in the switch II region by LRRK2 prevents the association of RAB regulatory proteins, including CHM, CHML and RAB GDP dissociation inhibitors GDI1 and GDI2. As to expression, specifically expressed in brain.

It localises to the cytoplasm. Its subcellular location is the cytosol. The protein localises to the lysosome. The protein resides in the cytoplasmic vesicle. It is found in the secretory vesicle. It localises to the cell projection. Its subcellular location is the axon. The protein localises to the cell membrane. The protein resides in the presynapse. It is found in the postsynapse. It catalyses the reaction GTP + H2O = GDP + phosphate + H(+). Its activity is regulated as follows. Regulated by guanine nucleotide exchange factors (GEFs) including RAB3IL1 and MADD which promote the exchange of bound GDP for free GTP. Regulated by GTPase activating proteins (GAPs) including RAB3GAP1 and TBC1D10B which increase the GTP hydrolysis activity. Inhibited by GDP dissociation inhibitors (GDIs) which prevent Rab-GDP dissociation. Functionally, the small GTPases Rab are key regulators of intracellular membrane trafficking, from the formation of transport vesicles to their fusion with membranes. Rabs cycle between an inactive GDP-bound form and an active GTP-bound form that is able to recruit to membranes different sets of downstream effectors directly responsible for vesicle formation, movement, tethering and fusion. RAB3A plays a central role in regulated exocytosis and secretion. Controls the recruitment, tethering and docking of secretory vesicles to the plasma membrane. Upon stimulation, switches to its active GTP-bound form, cycles to vesicles and recruits effectors such as RIMS1, RIMS2, Rabphilin-3A/RPH3A, RPH3AL or SYTL4 to help the docking of vesicules onto the plasma membrane. Upon GTP hydrolysis by GTPase-activating protein, dissociates from the vesicle membrane allowing the exocytosis to proceed. Stimulates insulin secretion through interaction with RIMS2 or RPH3AL effectors in pancreatic beta cells. Regulates calcium-dependent lysosome exocytosis and plasma membrane repair (PMR) via the interaction with 2 effectors, SYTL4 and myosin-9/MYH9. Acts as a positive regulator of acrosome content secretion in sperm cells by interacting with RIMS1. Also plays a role in the regulation of dopamine release by interacting with synaptotagmin I/SYT. This chain is Ras-related protein Rab-3A (RAB3A), found in Bos taurus (Bovine).